A 360-amino-acid chain; its full sequence is Photosystem II protein D1 2 (360 aa).

Transmembrane regions (helical) follow at residues 29-46 (YIGW…AATI), 118-133 (HFLI…EWEL), and 142-156 (WIPV…AATA). His-118 contacts chlorophyll a. A pheophytin a-binding site is contributed by Tyr-126. [CaMn4O5] cluster contacts are provided by Asp-170 and Glu-189. A helical membrane pass occupies residues 197 to 218 (FHMLGVAGVFGGALFAAMHGSL). His-198 contacts chlorophyll a. Residues His-215 and 264–265 (SF) contribute to the a quinone site. His-215 is a Fe cation binding site. Residue His-272 coordinates Fe cation. Residues 274–288 (FLAAWPVVGIWFAAL) form a helical membrane-spanning segment. [CaMn4O5] cluster is bound by residues His-332, Glu-333, Asp-342, and Ala-344. Residues 345-360 (SGELAPVAMIAPSIEA) constitute a propeptide that is removed on maturation.

It belongs to the reaction center PufL/M/PsbA/D family. In terms of assembly, PSII is composed of 1 copy each of membrane proteins PsbA, PsbB, PsbC, PsbD, PsbE, PsbF, PsbH, PsbI, PsbJ, PsbK, PsbL, PsbM, PsbT, PsbX, PsbY, PsbZ, Psb30/Ycf12, peripheral proteins PsbO, CyanoQ (PsbQ), PsbU, PsbV and a large number of cofactors. It forms dimeric complexes. Requires The D1/D2 heterodimer binds P680, chlorophylls that are the primary electron donor of PSII, and subsequent electron acceptors. It shares a non-heme iron and each subunit binds pheophytin, quinone, additional chlorophylls, carotenoids and lipids. D1 provides most of the ligands for the Mn4-Ca-O5 cluster of the oxygen-evolving complex (OEC). There is also a Cl(-1) ion associated with D1 and D2, which is required for oxygen evolution. The PSII complex binds additional chlorophylls, carotenoids and specific lipids. as cofactor. In terms of processing, tyr-161 forms a radical intermediate that is referred to as redox-active TyrZ, YZ or Y-Z. C-terminally processed by CtpA; processing is essential to allow assembly of the oxygen-evolving complex and thus photosynthetic growth.

It is found in the cellular thylakoid membrane. It carries out the reaction 2 a plastoquinone + 4 hnu + 2 H2O = 2 a plastoquinol + O2. Its function is as follows. Photosystem II (PSII) is a light-driven water:plastoquinone oxidoreductase that uses light energy to abstract electrons from H(2)O, generating O(2) and a proton gradient subsequently used for ATP formation. It consists of a core antenna complex that captures photons, and an electron transfer chain that converts photonic excitation into a charge separation. The D1/D2 (PsbA/PsbD) reaction center heterodimer binds P680, the primary electron donor of PSII as well as several subsequent electron acceptors. This is Photosystem II protein D1 2 from Synechococcus elongatus.